Reading from the N-terminus, the 315-residue chain is Sulfate adenylyltransferase subunit 2 1 (315 aa).

A disordered region spans residues 287–315; the sequence is DSSSSERQGRAIDHDQSGSMERKKREGYF. A compositionally biased stretch (basic and acidic residues) spans 293–315; it reads RQGRAIDHDQSGSMERKKREGYF.

Belongs to the PAPS reductase family. CysD subfamily. As to quaternary structure, heterodimer composed of CysD, the smaller subunit, and CysN.

It carries out the reaction sulfate + ATP + H(+) = adenosine 5'-phosphosulfate + diphosphate. It participates in sulfur metabolism; hydrogen sulfide biosynthesis; sulfite from sulfate: step 1/3. Functionally, with CysN forms the ATP sulfurylase (ATPS) that catalyzes the adenylation of sulfate producing adenosine 5'-phosphosulfate (APS) and diphosphate, the first enzymatic step in sulfur assimilation pathway. APS synthesis involves the formation of a high-energy phosphoric-sulfuric acid anhydride bond driven by GTP hydrolysis by CysN coupled to ATP hydrolysis by CysD. The sequence is that of Sulfate adenylyltransferase subunit 2 1 from Alkalilimnicola ehrlichii (strain ATCC BAA-1101 / DSM 17681 / MLHE-1).